We begin with the raw amino-acid sequence, 434 residues long: F-box/kelch-repeat protein At1g55270 (434 aa).

An F-box domain is found at 76–122; it reads PPLLPGLPDDLAVACLIRVPRAEHRKLRLVCKRWYRLASGNFFYSQR. Kelch repeat units lie at residues 129 to 178, 180 to 227, 229 to 276, 278 to 321, and 325 to 371; these read EEWV…VLSG, HLYL…VINN, LYVA…VYDK, WFLK…SLNG, and GLDC…LHNK.

This Arabidopsis thaliana (Mouse-ear cress) protein is F-box/kelch-repeat protein At1g55270.